A 255-amino-acid chain; its full sequence is Uridylate kinase (255 aa).

ATP is bound at residue 22-25; sequence KLSG. Positions 30-35 are involved in allosteric activation by GTP; that stretch reads GNGGYG. Gly-64 serves as a coordination point for UMP. The ATP site is built by Gly-65 and Arg-69. UMP-binding positions include Asp-85 and 146–153; that span reads TGNPFFTT. ATP contacts are provided by Asn-174, Tyr-180, and Asp-183.

It belongs to the UMP kinase family. In terms of assembly, homohexamer.

The protein localises to the cytoplasm. The enzyme catalyses UMP + ATP = UDP + ADP. Its pathway is pyrimidine metabolism; CTP biosynthesis via de novo pathway; UDP from UMP (UMPK route): step 1/1. Allosterically activated by GTP. Inhibited by UTP. In terms of biological role, catalyzes the reversible phosphorylation of UMP to UDP. The polypeptide is Uridylate kinase (Rubrobacter xylanophilus (strain DSM 9941 / JCM 11954 / NBRC 16129 / PRD-1)).